Reading from the N-terminus, the 185-residue chain is Elongation factor P (185 aa).

Belongs to the elongation factor P family.

It localises to the cytoplasm. The protein operates within protein biosynthesis; polypeptide chain elongation. Functionally, involved in peptide bond synthesis. Stimulates efficient translation and peptide-bond synthesis on native or reconstituted 70S ribosomes in vitro. Probably functions indirectly by altering the affinity of the ribosome for aminoacyl-tRNA, thus increasing their reactivity as acceptors for peptidyl transferase. The chain is Elongation factor P from Bacillus velezensis (strain DSM 23117 / BGSC 10A6 / LMG 26770 / FZB42) (Bacillus amyloliquefaciens subsp. plantarum).